The chain runs to 207 residues: Guanylate kinase (207 aa).

Residues 6 to 185 form the Guanylate kinase-like domain; sequence GLLIVLSGPS…AKERIQSIVE (180 aa). Residue 13-20 coordinates ATP; the sequence is GPSGVGKG.

Belongs to the guanylate kinase family.

The protein localises to the cytoplasm. It catalyses the reaction GMP + ATP = GDP + ADP. Its function is as follows. Essential for recycling GMP and indirectly, cGMP. The protein is Guanylate kinase of Staphylococcus haemolyticus (strain JCSC1435).